Consider the following 216-residue polypeptide: Octanoyltransferase (216 aa).

One can recognise a BPL/LPL catalytic domain in the interval 32-211; that stretch reads QEASEMLWFL…RFPYFLEALQ (180 aa). Residues 71–78, 142–144, and 155–157 each bind substrate; these read RGGRYTYH, AIG, and GFS. Cysteine 173 acts as the Acyl-thioester intermediate in catalysis.

This sequence belongs to the LipB family.

Its subcellular location is the cytoplasm. It catalyses the reaction octanoyl-[ACP] + L-lysyl-[protein] = N(6)-octanoyl-L-lysyl-[protein] + holo-[ACP] + H(+). It participates in protein modification; protein lipoylation via endogenous pathway; protein N(6)-(lipoyl)lysine from octanoyl-[acyl-carrier-protein]: step 1/2. Functionally, catalyzes the transfer of endogenously produced octanoic acid from octanoyl-acyl-carrier-protein onto the lipoyl domains of lipoate-dependent enzymes. Lipoyl-ACP can also act as a substrate although octanoyl-ACP is likely to be the physiological substrate. The polypeptide is Octanoyltransferase (Zymomonas mobilis subsp. mobilis (strain ATCC 31821 / ZM4 / CP4)).